A 525-amino-acid polypeptide reads, in one-letter code: Penton protein (525 aa).

The segment at 1 to 47 is disordered; that stretch reads MWGLQPPTSIPPPPPPTELTPSTYPAMVNGYPPPAASAQSCSSSGGQ. The segment covering 8–18 has biased composition (pro residues); sequence TSIPPPPPPTE. A compositionally biased stretch (low complexity) spans 36-47; sequence ASAQSCSSSGGQ.

This sequence belongs to the adenoviridae penton family. In terms of assembly, interacts with the fiber protein (via N-terminal tail region). Interacts with the capsid vertex protein; this interaction binds the penton base to neighboring peripentonal hexons.

It is found in the virion. It localises to the host nucleus. Its function is as follows. Major capsid protein that self-associates to form penton base pentamers, each in the shape of a pentagon, situated at the 12 vertices of the pseudo T=25 capsid. Involved in virus secondary attachment to host cell after initial attachment by the fiber protein, and in endocytosis of virions. As the virus enters the host cell, penton proteins are shed concomitant with virion acidification in the endosome. In Galliformes (FAdV-10), this protein is Penton protein.